A 96-amino-acid polypeptide reads, in one-letter code: Co-chaperonin GroES (96 aa).

It belongs to the GroES chaperonin family. Heptamer of 7 subunits arranged in a ring. Interacts with the chaperonin GroEL.

It localises to the cytoplasm. Its function is as follows. Together with the chaperonin GroEL, plays an essential role in assisting protein folding. The GroEL-GroES system forms a nano-cage that allows encapsulation of the non-native substrate proteins and provides a physical environment optimized to promote and accelerate protein folding. GroES binds to the apical surface of the GroEL ring, thereby capping the opening of the GroEL channel. In Allochromatium vinosum (Chromatium vinosum), this protein is Co-chaperonin GroES.